Here is a 61-residue protein sequence, read N- to C-terminus: Small ribosomal subunit protein uS14 (61 aa).

Residues C24, C27, C40, and C43 each coordinate Zn(2+).

Belongs to the universal ribosomal protein uS14 family. Zinc-binding uS14 subfamily. Part of the 30S ribosomal subunit. Contacts proteins S3 and S10. Zn(2+) serves as cofactor.

In terms of biological role, binds 16S rRNA, required for the assembly of 30S particles and may also be responsible for determining the conformation of the 16S rRNA at the A site. The chain is Small ribosomal subunit protein uS14 from Acidothermus cellulolyticus (strain ATCC 43068 / DSM 8971 / 11B).